A 379-amino-acid polypeptide reads, in one-letter code: Queuine tRNA-ribosyltransferase (379 aa).

D93 functions as the Proton acceptor in the catalytic mechanism. Residues D93–F97, D147, Q191, and G218 contribute to the substrate site. Residues G249–D255 form an RNA binding region. D268 functions as the Nucleophile in the catalytic mechanism. An RNA binding; important for wobble base 34 recognition region spans residues T273–R277. Residues C306, C308, C311, and H337 each contribute to the Zn(2+) site.

The protein belongs to the queuine tRNA-ribosyltransferase family. Homodimer. Within each dimer, one monomer is responsible for RNA recognition and catalysis, while the other monomer binds to the replacement base PreQ1. The cofactor is Zn(2+).

It catalyses the reaction 7-aminomethyl-7-carbaguanine + guanosine(34) in tRNA = 7-aminomethyl-7-carbaguanosine(34) in tRNA + guanine. Its pathway is tRNA modification; tRNA-queuosine biosynthesis. Functionally, catalyzes the base-exchange of a guanine (G) residue with the queuine precursor 7-aminomethyl-7-deazaguanine (PreQ1) at position 34 (anticodon wobble position) in tRNAs with GU(N) anticodons (tRNA-Asp, -Asn, -His and -Tyr). Catalysis occurs through a double-displacement mechanism. The nucleophile active site attacks the C1' of nucleotide 34 to detach the guanine base from the RNA, forming a covalent enzyme-RNA intermediate. The proton acceptor active site deprotonates the incoming PreQ1, allowing a nucleophilic attack on the C1' of the ribose to form the product. After dissociation, two additional enzymatic reactions on the tRNA convert PreQ1 to queuine (Q), resulting in the hypermodified nucleoside queuosine (7-(((4,5-cis-dihydroxy-2-cyclopenten-1-yl)amino)methyl)-7-deazaguanosine). The protein is Queuine tRNA-ribosyltransferase of Actinobacillus succinogenes (strain ATCC 55618 / DSM 22257 / CCUG 43843 / 130Z).